The sequence spans 73 residues: uncharacterized protein (73 aa).

The protein belongs to the YeeT/YkfH/YpjJ family.

This is an uncharacterized protein from Escherichia coli (strain K12).